The primary structure comprises 414 residues: tRNA(Ile)-lysidine synthase (414 aa).

An ATP-binding site is contributed by 17–22 (SGGCDS).

Belongs to the tRNA(Ile)-lysidine synthase family.

It localises to the cytoplasm. The catalysed reaction is cytidine(34) in tRNA(Ile2) + L-lysine + ATP = lysidine(34) in tRNA(Ile2) + AMP + diphosphate + H(+). Its function is as follows. Ligates lysine onto the cytidine present at position 34 of the AUA codon-specific tRNA(Ile) that contains the anticodon CAU, in an ATP-dependent manner. Cytidine is converted to lysidine, thus changing the amino acid specificity of the tRNA from methionine to isoleucine. The chain is tRNA(Ile)-lysidine synthase from Exiguobacterium sibiricum (strain DSM 17290 / CCUG 55495 / CIP 109462 / JCM 13490 / 255-15).